The sequence spans 309 residues: DNA-directed RNA polymerase subunit alpha (309 aa).

The segment at 1 to 227 (MTFQVECVES…ALFEPLKNVS (227 aa)) is alpha N-terminal domain (alpha-NTD). Residues 237–309 (EPTPESQTPI…GIKLQESKVS (73 aa)) are alpha C-terminal domain (alpha-CTD).

This sequence belongs to the RNA polymerase alpha chain family. In cyanobacteria the RNAP catalytic core is composed of 2 alpha, 1 beta, 1 beta', 1 gamma and 1 omega subunit. When a sigma factor is associated with the core the holoenzyme is formed, which can initiate transcription.

It catalyses the reaction RNA(n) + a ribonucleoside 5'-triphosphate = RNA(n+1) + diphosphate. DNA-dependent RNA polymerase catalyzes the transcription of DNA into RNA using the four ribonucleoside triphosphates as substrates. This is DNA-directed RNA polymerase subunit alpha from Synechococcus elongatus (strain ATCC 33912 / PCC 7942 / FACHB-805) (Anacystis nidulans R2).